A 103-amino-acid polypeptide reads, in one-letter code: Acyl-CoA-binding protein (103 aa).

Residues 18-103 (HQADFDEAAE…AKTMVEKYGI (86 aa)) enclose the ACB domain. An acyl-CoA-binding positions include lysine 30, 45-49 (YGFYK), lysine 67, lysine 71, and tyrosine 90.

Belongs to the ACBP family. Monomer.

It localises to the endoplasmic reticulum. The protein localises to the golgi apparatus. Its function is as follows. Binds medium- and long-chain acyl-CoA esters with very high affinity and may function as an intracellular carrier of acyl-CoA esters. It is also able to displace diazepam from the benzodiazepine (BZD) recognition site located on the GABA type A receptor. It is therefore possible that this protein also acts as a neuropeptide to modulate the action of the GABA receptor. This Anas platyrhynchos (Mallard) protein is Acyl-CoA-binding protein (DBI).